We begin with the raw amino-acid sequence, 109 residues long: uncharacterized protein (109 aa).

A helical membrane pass occupies residues V26–L48.

Its subcellular location is the membrane. This is an uncharacterized protein from Saccharomyces cerevisiae (strain ATCC 204508 / S288c) (Baker's yeast).